Reading from the N-terminus, the 463-residue chain is GTPase Der (463 aa).

EngA-type G domains follow at residues 3-166 (PVVA…PESG) and 177-350 (IRIA…QSAM). GTP-binding positions include 9–16 (GRTNVGKS), 56–60 (DTGGI), 118–121 (NKID), 183–190 (GRPNVGKS), 230–234 (DTAGI), and 295–298 (NKWD). The 85-residue stretch at 351–435 (LDLSASRLTQ…PLKLVFKSAE (85 aa)) folds into the KH-like domain.

This sequence belongs to the TRAFAC class TrmE-Era-EngA-EngB-Septin-like GTPase superfamily. EngA (Der) GTPase family. In terms of assembly, associates with the 50S ribosomal subunit.

In terms of biological role, GTPase that plays an essential role in the late steps of ribosome biogenesis. The chain is GTPase Der from Methylococcus capsulatus (strain ATCC 33009 / NCIMB 11132 / Bath).